Here is a 679-residue protein sequence, read N- to C-terminus: Methionine--tRNA ligase (679 aa).

A 'HIGH' region motif is present at residues 14–24; the sequence is PYANGSIHLGH. 4 residues coordinate Zn(2+): C145, C148, C158, and C161. The short motif at 331–335 is the 'KMSKS' region element; it reads KMSKS. K334 is a binding site for ATP. The tRNA-binding domain occupies 577-679; the sequence is TFAAVDLRIA…NGAKPGQRVM (103 aa).

This sequence belongs to the class-I aminoacyl-tRNA synthetase family. MetG type 1 subfamily. Homodimer. Zn(2+) is required as a cofactor.

The protein localises to the cytoplasm. It catalyses the reaction tRNA(Met) + L-methionine + ATP = L-methionyl-tRNA(Met) + AMP + diphosphate. Functionally, is required not only for elongation of protein synthesis but also for the initiation of all mRNA translation through initiator tRNA(fMet) aminoacylation. The protein is Methionine--tRNA ligase of Stutzerimonas stutzeri (strain A1501) (Pseudomonas stutzeri).